A 436-amino-acid chain; its full sequence is Gamma-glutamyl phosphate reductase (436 aa).

The protein belongs to the gamma-glutamyl phosphate reductase family.

The protein resides in the cytoplasm. The enzyme catalyses L-glutamate 5-semialdehyde + phosphate + NADP(+) = L-glutamyl 5-phosphate + NADPH + H(+). Its pathway is amino-acid biosynthesis; L-proline biosynthesis; L-glutamate 5-semialdehyde from L-glutamate: step 2/2. Its function is as follows. Catalyzes the NADPH-dependent reduction of L-glutamate 5-phosphate into L-glutamate 5-semialdehyde and phosphate. The product spontaneously undergoes cyclization to form 1-pyrroline-5-carboxylate. This is Gamma-glutamyl phosphate reductase from Prochlorococcus marinus (strain MIT 9312).